A 145-amino-acid polypeptide reads, in one-letter code: Large ribosomal subunit protein uL15 (145 aa).

A compositionally biased stretch (basic residues) spans 1–30; sequence MAHSLRKTRKLRGHVSHGHGRIGKHRKHPG. Residues 1–48 form a disordered region; the sequence is MAHSLRKTRKLRGHVSHGHGRIGKHRKHPGGRGNAGGQHHHRINRDKY.

The protein belongs to the universal ribosomal protein uL15 family. As to quaternary structure, component of the large ribosomal subunit.

It is found in the cytoplasm. The protein resides in the cytosol. The protein localises to the rough endoplasmic reticulum. In terms of biological role, component of the large ribosomal subunit. This Oscheius tipulae protein is Large ribosomal subunit protein uL15 (rpl-27a).